Here is a 388-residue protein sequence, read N- to C-terminus: Subtilisin-like serine protease AsES (388 aa).

A signal peptide spans 1–15 (MRLSLVLALLPVAFG). A propeptide spans 16–105 (APTRRDEPAP…IEQDAIVTLA (90 aa)) (removed in mature form). Residues 114–388 (PWGLARISTR…RLAFNGNPSG (275 aa)) enclose the Peptidase S8 domain. A disulfide bridge connects residues Cys141 and Cys230. Residues Asp146 and His176 each act as charge relay system in the active site. N-linked (GlcNAc...) asparagine glycans are attached at residues Asn232 and Asn237. The cysteines at positions 285 and 357 are disulfide-linked. Ser331 (charge relay system) is an active-site residue.

It belongs to the peptidase S8 family.

Its subcellular location is the secreted. Its activity is regulated as follows. The elicitor proteolytic activity is completely inhibited by PMSF. The activity is also significantly reduced by aprotinin (leading to 37% residual activity), by leupeptin (leading to 54% residual activity), by the ovomucoid trypsin inhibitor (leading to 65% residual activity), and by p-aminobenzamidine (leading to 26% residual activity). Extracellular elicitor protein that induces a strong defense response in strawberry and confers both local and systemic plant resistance against the fungal pathogen Colletotricum acutatum, the casual agent of anthracnose disease. AsES activates a cascade of defense responses, including calcium influx, oxidative burst, hypersensitive cell-death response (HR), accumulation of autofluorescent compounds, cell-wall reinforcement with callose and lignin deposition, salicylic acid accumulation, and expression of defense-related genes, such as PR1, PG1, MYB30, RBOH-D, RBOH-F, CHI23, and FLS. The oxidative burst consists in a progressive extracellular accumulation of H(2)O(2) that starts immediately after the contact with AsES and is preceded by a rapid and transient cell membrane depolarization. During this phase takes place also a rapid intracellular accumulation of NO at the chloroplasts. After the first extracellular H(2)O(2) production phase, two intracellular H(2)O(2) accumulation events occur, the first 2 hours after induction, and the second 7 hours after induction. AsES also produces a transient increase of ion leakage, and a progressive alkalinization of the extracellular medium. Confers also local and systemic plant resistance against Botrytis cinerea in Arabidopsis thaliana. Systemic, but not local resistance is dependent on the length of exposure to AsES. The protection to B.cinerea is due to the induction of the plant defenses via the salicylic acid, jasmonic acid and ethylene signaling pathways. Exhibits subtilisin-like proteolytic activity which is necessary but not sufficient for its elicitor function in strawberry plants. Probably induces defense by means of proteolysis of one or multiple host proteins that are specific targets of this protease. This chain is Subtilisin-like serine protease AsES, found in Sarocladium strictum (Black bundle disease fungus).